A 558-amino-acid polypeptide reads, in one-letter code: Serine palmitoyltransferase 1 (558 aa).

Residues 1–49 (MAHIPEVLPKSIPIPAFIVTTSSYLWYYFNLVLTQIPGGQFIVSYIKKS) are Lumenal-facing. A helical transmembrane segment spans residues 50–84 (HHDDPYRTTVEIGLILYGIIYYLSKPQQKKSLQAQ). The Cytoplasmic segment spans residues 85–341 (KPNLSPQEID…GRGLSEHFNM (257 aa)). Thr-121 bears the Phosphothreonine mark. The chain crosses the membrane as a helical span at residues 342–371 (DRATAIDITVGSMATALGSTGGFVLGDSVM). At 372-424 (CLHQRIGSNAYCFSACLPAYTVTSVSKVLKLMDSNNDAVQTLQKLSKSLHDSF) the chain is on the lumenal side. A helical transmembrane segment spans residues 425 to 457 (ASDDSLRSYVIVTSSPVSAVLHLQLTPAYRSRK). Topologically, residues 458–558 (FGYTCEQLFE…ILACCQESNK (101 aa)) are cytoplasmic.

This sequence belongs to the class-II pyridoxal-phosphate-dependent aminotransferase family. As to quaternary structure, LCB1 and LCB2 encode essential subunits of the enzyme and form a heterodimer. Component of the SPOTS complex, at least composed of LCB1/2 (LCB1 and/or LCB2), ORM1/2 (ORM1 and/or ORM2), SAC1 and TSC3. Interacts with LCB2 and TSC3. Requires pyridoxal 5'-phosphate as cofactor.

It is found in the cytoplasm. Its subcellular location is the endoplasmic reticulum membrane. It carries out the reaction L-serine + hexadecanoyl-CoA + H(+) = 3-oxosphinganine + CO2 + CoA. The protein operates within lipid metabolism; sphingolipid metabolism. In terms of biological role, component of serine palmitoyltransferase (SPT), which catalyzes the committed step in the synthesis of sphingolipids, the condensation of serine with palmitoyl CoA to form the long chain base 3-ketosphinganine. The polypeptide is Serine palmitoyltransferase 1 (LCB1) (Saccharomyces cerevisiae (strain ATCC 204508 / S288c) (Baker's yeast)).